We begin with the raw amino-acid sequence, 156 residues long: Persephin (156 aa).

An N-terminal signal peptide occupies residues 1–21; that stretch reads MAVGKFLLGSLLLLSLQLGQG. 3 cysteine pairs are disulfide-bonded: Cys-66–Cys-124, Cys-93–Cys-152, and Cys-97–Cys-154.

It belongs to the TGF-beta family. GDNF subfamily. As to quaternary structure, homodimer; disulfide-linked. Interacts with GFRA4 coreceptor and RET: forms a 2:2:2 ternary complex composed of PSPN ligand, GFRA4 and RET receptor.

It is found in the secreted. Growth factor that exhibits neurotrophic activity on mesencephalic dopaminergic and motor neurons. Acts by binding to its coreceptor, GFRA4, leading to autophosphorylation and activation of the RET receptor. In Homo sapiens (Human), this protein is Persephin.